Consider the following 141-residue polypeptide: Nucleoside diphosphate kinase (141 aa).

ATP is bound by residues Lys11, Phe59, Arg87, Thr93, Arg104, and Asn114. His117 functions as the Pros-phosphohistidine intermediate in the catalytic mechanism.

Belongs to the NDK family. As to quaternary structure, homotetramer. It depends on Mg(2+) as a cofactor.

Its subcellular location is the cytoplasm. The enzyme catalyses a 2'-deoxyribonucleoside 5'-diphosphate + ATP = a 2'-deoxyribonucleoside 5'-triphosphate + ADP. The catalysed reaction is a ribonucleoside 5'-diphosphate + ATP = a ribonucleoside 5'-triphosphate + ADP. Its function is as follows. Major role in the synthesis of nucleoside triphosphates other than ATP. The ATP gamma phosphate is transferred to the NDP beta phosphate via a ping-pong mechanism, using a phosphorylated active-site intermediate. This is Nucleoside diphosphate kinase from Paraburkholderia phymatum (strain DSM 17167 / CIP 108236 / LMG 21445 / STM815) (Burkholderia phymatum).